We begin with the raw amino-acid sequence, 526 residues long: MQASDPIPPQLGVPFATSYAALTVAAVTLLAALLVHELSAYSKRRSMPPGPFRWPLIGNALQMPQIHPWLTFSRWARVYGDIFYLDALGQHIVVINSATVARELLDRRSSIYSGRPHLTMVGDLAGYDRMIVMQPYGDELRQQRRLISQTLSTSTIGQYYDIQEAAARRLVLGVIDDPSSLEGQIKMNIASIIMLVTYGYTVKGTEDVFFGRAIEIMDNLTLAARPGVWLADMIPQLKYFPSWMPGLSSLKAAEAWRKLLHTTNGMVYQWCKENSENGTAHLPNLCASVLAQAEGKATLQLEESLMWAALTVLSGGLDTNISTILSFILAMLHYPDVQKKAQAEIDAVVGSGRLPQISDKSSLPYIRSVIAESYRWLPATPLSVPHALDEDDIYDGSFLPKGSIIMPNVWHMLHDPKIYPEPDAFKPERYGGSDIEMKKVTDIAFGFGRRACPGFYFAEGTIFSIVVTVLATCDIVPVVNDHGQEIIPDIRYSTNVVLCPEDVKCTFRPRSEQAKSALIDSMTGVL.

Residues 15–35 (FATSYAALTVAAVTLLAALLV) form a helical membrane-spanning segment. Residues asparagine 219, asparagine 277, and asparagine 320 are each glycosylated (N-linked (GlcNAc...) asparagine). Cysteine 452 is a heme binding site.

This sequence belongs to the cytochrome P450 family. The cofactor is heme.

The protein resides in the membrane. Its pathway is secondary metabolite biosynthesis. Cytochrome P450 monooxygenase that is able to use anthracene, carbazole and phenanthrene as substrates for oxidation. These multifunctional properties against a series of polycyclic aromatic hydrocarbons (PAHs) suggest that CYP226 would play important roles, at least in part, in fungal metabolic systems involved in xenobiotic detoxification. The protein is Cytochrome P450 monooxygenase 226 of Postia placenta (strain ATCC 44394 / Madison 698-R) (Brown rot fungus).